The primary structure comprises 226 residues: Ribonuclease 3 (226 aa).

The RNase III domain maps to 7-129 (LPRLCRTLGY…IIGAIYLDSD (123 aa)). Position 42 (Glu42) interacts with Mg(2+). Residue Asp46 is part of the active site. Residues Asp115 and Glu118 each coordinate Mg(2+). Glu118 is an active-site residue. A DRBM domain is found at 156-226 (DAKTLLQEYL…AAQVLELLKK (71 aa)).

Belongs to the ribonuclease III family. In terms of assembly, homodimer. Mg(2+) serves as cofactor.

It is found in the cytoplasm. The catalysed reaction is Endonucleolytic cleavage to 5'-phosphomonoester.. Its function is as follows. Digests double-stranded RNA. Involved in the processing of primary rRNA transcript to yield the immediate precursors to the large and small rRNAs (23S and 16S). Processes some mRNAs, and tRNAs when they are encoded in the rRNA operon. Processes pre-crRNA and tracrRNA of type II CRISPR loci if present in the organism. The polypeptide is Ribonuclease 3 (Shewanella sp. (strain W3-18-1)).